Consider the following 736-residue polypeptide: Oxysterol-binding protein-related protein 9 (736 aa).

Ala2 carries the post-translational modification N-acetylalanine. The PH domain occupies 2 to 99 (ASIVEGPLSK…WIHALEETIL (98 aa)). Residues 209 to 368 (LEPVISTMPS…RDDDGEAGSV (160 aa)) form a disordered region. Positions 253-274 (TPTPNSTGSGNSPPSSSLTPPS) are enriched in low complexity. Ser306, Ser324, Ser325, Ser326, and Ser329 each carry phosphoserine. Polar residues-rich tracts occupy residues 314 to 329 (SSGS…SGNS) and 336 to 348 (TESL…NGTS). Residue Ser611 is modified to Phosphoserine.

The protein belongs to the OSBP family. In terms of assembly, heterodimer with OSBPL11. Interacts with OSBPL10.

Its subcellular location is the late endosome membrane. It localises to the golgi apparatus. The protein localises to the trans-Golgi network membrane. It catalyses the reaction a 1,2-diacyl-sn-glycero-3-phospho-(1D-myo-inositol 4-phosphate)(out) + a 1,2-diacyl-sn-glycero-3-phospho-L-serine(in) = a 1,2-diacyl-sn-glycero-3-phospho-(1D-myo-inositol 4-phosphate)(in) + a 1,2-diacyl-sn-glycero-3-phospho-L-serine(out). Interacts with OSBPL11 to function as lipid transfer proteins. Together they form a heterodimer that localizes at the ER-trans-Golgi membrane contact sites, and exchanges phosphatidylserine (1,2-diacyl-sn-glycero-3-phospho-L-serine, PS) for phosphatidylinositol-4-phosphate (1,2-diacyl-sn-glycero-3-phospho-(1D-myo-inositol 4-phosphate), PI(4)P) between the two organelles, a step that is critical for sphingomyelin synthesis in the Golgi complex. In Mus musculus (Mouse), this protein is Oxysterol-binding protein-related protein 9 (Osbpl9).